The sequence spans 495 residues: MRTNPTTSGPAVSTLDEKNLGRIAQIIGPVLDVVFPPGKMPNIYNALVVKGRDTVGQQINVTCEVQQLLGNNRVRAVAMSATDGLTRGMEVIDTGAPLSVPVGGATLGRIFNVLGEPVDNLGPVDTRTTSPIHRSGPAFIQLDTKFSIFETGIKVVDLLAPYRRGGKIGLFGGAGVGKTVLIMELINNIAKAHGGVSVFGGVGERTREGNDLYMEMKESGVINEKNIAESKVALVYGQMNEPPGARMRVGLTALTMAEYFRDVNEQDVLLFIDNIFRFVQAGSEVSALLGRMPSAVGYQPTLSTEMGSLQERITSTKEGSITSIQAVYVPADDLTDPAPATTFAHLDATTVLSRGLAAKGIYPAVDPLDSTSTMLQPGIVGEEHYETAQKVKQTLQRYKELQDIIAILGLDELSEEDRLTVARARKIERFLSQPFFVAEVFTGSPGKYVGLAETVRGFQLILSGELDSLPEQAFYLVGNIDEATAKAMNLEGEKK.

Residue 172-179 (GGAGVGKT) participates in ATP binding.

It belongs to the ATPase alpha/beta chains family. In terms of assembly, F-type ATPases have 2 components, CF(1) - the catalytic core - and CF(0) - the membrane proton channel. CF(1) has five subunits: alpha(3), beta(3), gamma(1), delta(1), epsilon(1). CF(0) has four main subunits: a(1), b(1), b'(1) and c(9-12).

It localises to the plastid. The protein localises to the chloroplast thylakoid membrane. The catalysed reaction is ATP + H2O + 4 H(+)(in) = ADP + phosphate + 5 H(+)(out). Functionally, produces ATP from ADP in the presence of a proton gradient across the membrane. The catalytic sites are hosted primarily by the beta subunits. This Convallaria majalis (Lily of the valley) protein is ATP synthase subunit beta, chloroplastic.